A 269-amino-acid chain; its full sequence is Phosphonoacetaldehyde hydrolase (269 aa).

The active-site Nucleophile is the D10. Mg(2+)-binding residues include D10 and A12. The Schiff-base intermediate with substrate role is filled by K52. Residue D186 participates in Mg(2+) binding.

The protein belongs to the HAD-like hydrolase superfamily. PhnX family. In terms of assembly, homodimer. The cofactor is Mg(2+).

It catalyses the reaction phosphonoacetaldehyde + H2O = acetaldehyde + phosphate + H(+). Involved in phosphonate degradation. This Klebsiella pneumoniae subsp. pneumoniae (strain ATCC 700721 / MGH 78578) protein is Phosphonoacetaldehyde hydrolase.